We begin with the raw amino-acid sequence, 588 residues long: Vicilin C72 (588 aa).

The first 25 residues, 1 to 25 (MVRNKSACVVLLFSLFLSFGLLCSA), serve as a signal peptide directing secretion. Disordered regions lie at residues 159–183 (REREEEAEEEETEEGEQEQSHNPFH) and 460–487 (PRQSSFEEEEEQQQEQEQEEERRSGQYR). The segment covering 163–175 (EEAEEEETEEGEQ) has biased composition (acidic residues). Cupin type-1 domains lie at 182–340 (FHFH…EQLD) and 386–566 (FNLL…RLVD). A compositionally biased stretch (acidic residues) spans 465–478 (FEEEEEQQQEQEQE).

It belongs to the 7S seed storage protein family.

The protein localises to the vacuole. It localises to the aleurone grain. Seed storage protein. The protein is Vicilin C72 of Gossypium hirsutum (Upland cotton).